The chain runs to 160 residues: 6,7-dimethyl-8-ribityllumazine synthase (160 aa).

5-amino-6-(D-ribitylamino)uracil is bound by residues Trp-28, Ser-59–Glu-61, and Val-82–Ile-84. Position 87-88 (Gly-87–Thr-88) interacts with (2S)-2-hydroxy-3-oxobutyl phosphate. The active-site Proton donor is His-90. Phe-115 lines the 5-amino-6-(D-ribitylamino)uracil pocket. Arg-129 contacts (2S)-2-hydroxy-3-oxobutyl phosphate.

It belongs to the DMRL synthase family.

It carries out the reaction (2S)-2-hydroxy-3-oxobutyl phosphate + 5-amino-6-(D-ribitylamino)uracil = 6,7-dimethyl-8-(1-D-ribityl)lumazine + phosphate + 2 H2O + H(+). It participates in cofactor biosynthesis; riboflavin biosynthesis; riboflavin from 2-hydroxy-3-oxobutyl phosphate and 5-amino-6-(D-ribitylamino)uracil: step 1/2. Catalyzes the formation of 6,7-dimethyl-8-ribityllumazine by condensation of 5-amino-6-(D-ribitylamino)uracil with 3,4-dihydroxy-2-butanone 4-phosphate. This is the penultimate step in the biosynthesis of riboflavin. The polypeptide is 6,7-dimethyl-8-ribityllumazine synthase (Clavibacter sepedonicus (Clavibacter michiganensis subsp. sepedonicus)).